Here is a 447-residue protein sequence, read N- to C-terminus: GTPase Der (447 aa).

EngA-type G domains follow at residues lysine 4–glutamate 165 and leucine 180–asparagine 357. Residues glycine 10 to serine 17, aspartate 57 to leucine 61, asparagine 119 to glutamate 122, glycine 186 to serine 193, aspartate 233 to leucine 237, and asparagine 298 to aspartate 301 contribute to the GTP site. The region spanning lysine 358–lysine 443 is the KH-like domain.

The protein belongs to the TRAFAC class TrmE-Era-EngA-EngB-Septin-like GTPase superfamily. EngA (Der) GTPase family. As to quaternary structure, associates with the 50S ribosomal subunit.

Its function is as follows. GTPase that plays an essential role in the late steps of ribosome biogenesis. This chain is GTPase Der, found in Rickettsia akari (strain Hartford).